A 179-amino-acid chain; its full sequence is NAD(P)H-quinone oxidoreductase subunit I, chloroplastic (179 aa).

2 4Fe-4S ferredoxin-type domains span residues 55 to 84 (GRIH…VDWR) and 95 to 124 (LNYS…MTEE). 8 residues coordinate [4Fe-4S] cluster: Cys-64, Cys-67, Cys-70, Cys-74, Cys-104, Cys-107, Cys-110, and Cys-114.

Belongs to the complex I 23 kDa subunit family. NDH is composed of at least 16 different subunits, 5 of which are encoded in the nucleus. The cofactor is [4Fe-4S] cluster.

It is found in the plastid. It localises to the chloroplast thylakoid membrane. It catalyses the reaction a plastoquinone + NADH + (n+1) H(+)(in) = a plastoquinol + NAD(+) + n H(+)(out). The enzyme catalyses a plastoquinone + NADPH + (n+1) H(+)(in) = a plastoquinol + NADP(+) + n H(+)(out). In terms of biological role, NDH shuttles electrons from NAD(P)H:plastoquinone, via FMN and iron-sulfur (Fe-S) centers, to quinones in the photosynthetic chain and possibly in a chloroplast respiratory chain. The immediate electron acceptor for the enzyme in this species is believed to be plastoquinone. Couples the redox reaction to proton translocation, and thus conserves the redox energy in a proton gradient. The sequence is that of NAD(P)H-quinone oxidoreductase subunit I, chloroplastic from Nymphaea alba (White water-lily).